Consider the following 512-residue polypeptide: Cobyric acid synthase (512 aa).

The region spanning 251–451 (ALDITVIRLP…IHGLFDSANF (201 aa)) is the GATase cobBQ-type domain. C332 serves as the catalytic Nucleophile. Residue H443 is part of the active site.

This sequence belongs to the CobB/CobQ family. CobQ subfamily.

Its pathway is cofactor biosynthesis; adenosylcobalamin biosynthesis. Catalyzes amidations at positions B, D, E, and G on adenosylcobyrinic A,C-diamide. NH(2) groups are provided by glutamine, and one molecule of ATP is hydrogenolyzed for each amidation. The sequence is that of Cobyric acid synthase from Photorhabdus laumondii subsp. laumondii (strain DSM 15139 / CIP 105565 / TT01) (Photorhabdus luminescens subsp. laumondii).